The sequence spans 281 residues: Pantothenate synthetase (281 aa).

30–37 (MGYLHEGH) serves as a coordination point for ATP. H37 (proton donor) is an active-site residue. Residue Q61 participates in (R)-pantoate binding. Position 61 (Q61) interacts with beta-alanine. ATP is bound at residue 147–150 (GEKD). Q153 provides a ligand contact to (R)-pantoate. ATP-binding positions include I176 and 184–187 (KSSR).

It belongs to the pantothenate synthetase family. As to quaternary structure, homodimer.

It is found in the cytoplasm. The catalysed reaction is (R)-pantoate + beta-alanine + ATP = (R)-pantothenate + AMP + diphosphate + H(+). It functions in the pathway cofactor biosynthesis; (R)-pantothenate biosynthesis; (R)-pantothenate from (R)-pantoate and beta-alanine: step 1/1. In terms of biological role, catalyzes the condensation of pantoate with beta-alanine in an ATP-dependent reaction via a pantoyl-adenylate intermediate. This chain is Pantothenate synthetase, found in Clostridium botulinum (strain 657 / Type Ba4).